Here is a 217-residue protein sequence, read N- to C-terminus: DNA repair protein homolog YobH (217 aa).

The UmuC domain occupies 1 to 68 (MAKAIQSSMW…RPLSKMWGIG (68 aa)).

Belongs to the DNA polymerase type-Y family.

This Bacillus subtilis (strain 168) protein is DNA repair protein homolog YobH (yobH).